Consider the following 752-residue polypeptide: Granule-bound starch synthase 2, chloroplastic/amyloplastic (752 aa).

The transit peptide at 1-57 directs the protein to the chloroplast; it reads MMLSLGSDATVLPFHAKNLKFTPKLSTLNGDLAFSKGLGVGRLNCGSVRLNHKQHVR. Disordered stretches follow at residues 116-146 and 224-253; these read LEGN…SGSA and FENF…EKPP. An ADP-alpha-D-glucose-binding site is contributed by lysine 275.

This sequence belongs to the glycosyltransferase 1 family. Bacterial/plant glycogen synthase subfamily. As to expression, widely expressed.

Its subcellular location is the plastid. It is found in the chloroplast. The protein resides in the amyloplast. The catalysed reaction is [(1-&gt;4)-alpha-D-glucosyl](n) + ADP-alpha-D-glucose = [(1-&gt;4)-alpha-D-glucosyl](n+1) + ADP + H(+). The protein operates within glycan biosynthesis; starch biosynthesis. This is Granule-bound starch synthase 2, chloroplastic/amyloplastic from Pisum sativum (Garden pea).